The sequence spans 384 residues: Substance-K receptor (384 aa).

Residues 1 to 32 (MGAHAIVTDANISSSLENNTTGITAFSMPGWQ) lie on the Extracellular side of the membrane. Asn11, Asn18, and Asn19 each carry an N-linked (GlcNAc...) asparagine glycan. A helical transmembrane segment spans residues 33 to 56 (LALWATAYLVLVLVAVTGNATVIW). Over 57–69 (IILAHQRMRTVTN) the chain is Cytoplasmic. Residues 70-90 (YFIVNLALADLCMAAFNAAFN) form a helical membrane-spanning segment. Over 91–107 (FVYASHNIWYFGRAFCH) the chain is Extracellular. A disulfide bridge links Cys106 with Cys181. A helical transmembrane segment spans residues 108 to 129 (FQNLFPITAMFVSIYSMTAIAA). Over 130–149 (DRYVAIVHPFQPRLSAPGTR) the chain is Cytoplasmic. A helical membrane pass occupies residues 150-170 (AVIAGIWLLALALAFPQCFYS). The Extracellular segment spans residues 171–196 (TITMDQGATKCVVVWPEDNGSKMLLL). Residues 197 to 218 (YHLVVIALIYVLPLLVMLLAYS) traverse the membrane as a helical segment. Over 219–251 (VIGLTLWRREVPRHQVHGASLRHLRAKKKFVKT) the chain is Cytoplasmic. Residues 252–272 (MVLVVVTFAICWLPYHFYFIL) traverse the membrane as a helical segment. Residues 273-290 (GSFQEDIYYHKFIQQVYL) lie on the Extracellular side of the membrane. A helical transmembrane segment spans residues 291–310 (ALFWLAMSSTMYNPIIYCCL). Topologically, residues 311-384 (NHRFRSGFRL…GPQDGLPDEP (74 aa)) are cytoplasmic. A lipid anchor (S-palmitoyl cysteine) is attached at Cys324.

This sequence belongs to the G-protein coupled receptor 1 family.

Its subcellular location is the cell membrane. In terms of biological role, this is a receptor for the tachykinin neuropeptide substance K (neurokinin A). It is associated with G proteins that activate a phosphatidylinositol-calcium second messenger system. This Canis lupus familiaris (Dog) protein is Substance-K receptor (TACR2).